The following is a 150-amino-acid chain: Protein Turandot X (150 aa).

The signal sequence occupies residues 1 to 22 (MGLHIGSLLICVFLGILPFATA). Positions 127 to 150 (REEGQSNHANSPTTLPSRIQKMTK) are disordered. Residues 132–150 (SNHANSPTTLPSRIQKMTK) are compositionally biased toward polar residues.

It belongs to the Turandot family.

It is found in the secreted. In terms of biological role, a humoral factor that may play a role in stress tolerance. In Drosophila simulans (Fruit fly), this protein is Protein Turandot X.